Here is a 328-residue protein sequence, read N- to C-terminus: Peroxisomal adenine nucleotide transporter 1 (328 aa).

The next 6 membrane-spanning stretches (helical) occupy residues 1–21, 78–98, 128–148, 185–202, 226–246, and 277–297; these read MLTLESALTGAVASAMANIAV, TVTTVATFVQNFVYFFWYTFI, LVLGVAAASISQLFTSPMAVV, LRTGLALTINPSITYASF, FILGVLSKMISTLVTQPLIVA, and WKGVLPQLTKGVIVQGLLFAF. 3 Solcar repeats span residues 1–101, 122–208, and 220–304; these read MLTL…IRKS, PSTI…LKEV, and LSAV…LTKS.

The protein belongs to the mitochondrial carrier (TC 2.A.29) family.

It localises to the peroxisome membrane. Its function is as follows. Adenine nucleotide transporter involved in the uniport of ATP and adenine nucleotide hetero-exchange transport between the cytosol and the peroxisomal lumen. This transport is accompanied by a proton transport from the peroxisomal lumen to the cytosol. Transport of ATP into the peroxisome is required for beta-oxidation of medium-chain fatty acids. Required for growth on medium-chain fatty acids, pH gradient formation in peroxisomes and for normal peroxisome proliferation. This chain is Peroxisomal adenine nucleotide transporter 1 (ANT1), found in Saccharomyces cerevisiae (strain ATCC 204508 / S288c) (Baker's yeast).